The primary structure comprises 784 residues: Homoaconitase, mitochondrial (784 aa).

The transit peptide at 1-32 (MIHPVRRALAVAASRAPRQFLAAASRTTSVRS) directs the protein to the mitochondrion. Residues Cys-399, Cys-468, and Cys-471 each contribute to the [4Fe-4S] cluster site. The interval 572 to 596 (EAGLTPESTSSSSSSSSSSEEESLT) is disordered. The segment covering 578–589 (ESTSSSSSSSSS) has biased composition (low complexity).

The protein belongs to the aconitase/IPM isomerase family. It depends on [4Fe-4S] cluster as a cofactor.

The protein resides in the mitochondrion. The catalysed reaction is (2R,3S)-homoisocitrate = cis-homoaconitate + H2O. It participates in amino-acid biosynthesis; L-lysine biosynthesis via AAA pathway; L-alpha-aminoadipate from 2-oxoglutarate: step 3/5. In terms of biological role, catalyzes the reversible hydration of cis-homoaconitate to (2R,3S)-homoisocitrate, a step in the alpha-aminoadipate pathway for lysine biosynthesis. The protein is Homoaconitase, mitochondrial (lys-4) of Neurospora crassa (strain ATCC 24698 / 74-OR23-1A / CBS 708.71 / DSM 1257 / FGSC 987).